The sequence spans 72 residues: uncharacterized protein (72 aa).

The chain crosses the membrane as a helical span at residues 41 to 58 (FSFLVHIMCGLTLTSYVI).

Its subcellular location is the membrane. This is an uncharacterized protein from Dictyostelium discoideum (Social amoeba).